A 181-amino-acid chain; its full sequence is Adenine phosphoribosyltransferase (181 aa).

It belongs to the purine/pyrimidine phosphoribosyltransferase family. Homodimer.

It localises to the cytoplasm. It carries out the reaction AMP + diphosphate = 5-phospho-alpha-D-ribose 1-diphosphate + adenine. It participates in purine metabolism; AMP biosynthesis via salvage pathway; AMP from adenine: step 1/1. Catalyzes a salvage reaction resulting in the formation of AMP, that is energically less costly than de novo synthesis. In Psychromonas ingrahamii (strain DSM 17664 / CCUG 51855 / 37), this protein is Adenine phosphoribosyltransferase.